A 640-amino-acid chain; its full sequence is ETV5-related protein Ets96B (640 aa).

Residues 315-375 form a disordered region; sequence HADSTTTAAQ…HHGHQQAEQQ (61 aa). Residues 321–356 are a coiled coil; it reads TAAQQQQQQQEQQQQQQQQQQQQQHQQQLQQAAALH. Positions 322–355 are enriched in low complexity; it reads AAQQQQQQQEQQQQQQQQQQQQQHQQQLQQAAAL. Basic residues predominate over residues 356 to 369; it reads HPHHHHSHHGHHGH. Residues 498–579 constitute a DNA-binding region (ETS); the sequence is LQLWQFLVAL…NGERYVYRFV (82 aa). Residues 609–624 show a composition bias toward polar residues; sequence LAKTPPTSGDSQTQSP. The segment at 609 to 628 is disordered; sequence LAKTPPTSGDSQTQSPRVAK.

The protein belongs to the ETS family. In the adult brain, expressed almost exclusively in dopaminergic neurons.

The protein localises to the nucleus. Its function is as follows. Required in dopaminergic neurons to regulate expression of genes involved in dopamine signaling. Decreases expression of the dopamine transporter DAT and increases expression of the dopamine transporter Vmat and the tyrosine 3-monooxygenase ple which is involved in dopamine biosynthesis. Also involved in negatively regulating the expression of a group of endoplasmic reticulum proteins, the molecular chaperone Calr and the protein disulfide isomerases CaBP1 and ERp60. The polypeptide is ETV5-related protein Ets96B (Drosophila melanogaster (Fruit fly)).